The chain runs to 494 residues: UPF0371 protein Sez_1293 (494 aa).

Belongs to the UPF0371 family.

The protein is UPF0371 protein Sez_1293 of Streptococcus equi subsp. zooepidemicus (strain MGCS10565).